We begin with the raw amino-acid sequence, 110 residues long: uncharacterized protein (110 aa).

This is an uncharacterized protein from Yersinia enterocolitica.